We begin with the raw amino-acid sequence, 269 residues long: Shikimate dehydrogenase (NADP(+)) (269 aa).

Residues 22-24 and Thr-68 each bind shikimate; that span reads TLS. The active-site Proton acceptor is Lys-72. The shikimate site is built by Asn-93 and Asp-104. NADP(+)-binding positions include 128–132, 152–157, and Phe-210; these read GAGGA and NRTNLR. A shikimate-binding site is contributed by Tyr-212. NADP(+) is bound at residue Gly-233.

This sequence belongs to the shikimate dehydrogenase family. As to quaternary structure, homodimer.

The enzyme catalyses shikimate + NADP(+) = 3-dehydroshikimate + NADPH + H(+). It participates in metabolic intermediate biosynthesis; chorismate biosynthesis; chorismate from D-erythrose 4-phosphate and phosphoenolpyruvate: step 4/7. In terms of biological role, involved in the biosynthesis of the chorismate, which leads to the biosynthesis of aromatic amino acids. Catalyzes the reversible NADPH linked reduction of 3-dehydroshikimate (DHSA) to yield shikimate (SA). The sequence is that of Shikimate dehydrogenase (NADP(+)) from Saccharolobus islandicus (strain L.S.2.15 / Lassen #1) (Sulfolobus islandicus).